Here is a 263-residue protein sequence, read N- to C-terminus: Glucosamine-6-phosphate deaminase (263 aa).

The active-site Proton acceptor; for enolization step is the aspartate 67. Residue asparagine 136 is the For ring-opening step of the active site. Residue histidine 138 is the Proton acceptor; for ring-opening step of the active site. Residue glutamate 143 is the For ring-opening step of the active site.

It belongs to the glucosamine/galactosamine-6-phosphate isomerase family. NagB subfamily. In terms of assembly, homohexamer.

The catalysed reaction is alpha-D-glucosamine 6-phosphate + H2O = beta-D-fructose 6-phosphate + NH4(+). It functions in the pathway amino-sugar metabolism; N-acetylneuraminate degradation; D-fructose 6-phosphate from N-acetylneuraminate: step 5/5. In terms of biological role, catalyzes the reversible isomerization-deamination of glucosamine 6-phosphate (GlcN6P) to form fructose 6-phosphate (Fru6P) and ammonium ion. The sequence is that of Glucosamine-6-phosphate deaminase from Cellvibrio japonicus (strain Ueda107) (Pseudomonas fluorescens subsp. cellulosa).